An 830-amino-acid chain; its full sequence is Beta-glucosidase A (830 aa).

The active site involves Asp769.

Belongs to the glycosyl hydrolase 3 family.

It catalyses the reaction Hydrolysis of terminal, non-reducing beta-D-glucosyl residues with release of beta-D-glucose.. Functionally, b.fibrisolvens beta-glucosidase hydrolyzes cellobiose to a limited extent, cellotriose to cellobiose and glucose, and cellotetraose and cellopentaose to predominantly glucose. This Butyrivibrio fibrisolvens protein is Beta-glucosidase A (bglA).